The sequence spans 693 residues: UvrABC system protein C (693 aa).

Residues 16–95 (DAPGVYRFRD…IKEFDPRFNV (80 aa)) form the GIY-YIG domain. One can recognise a UVR domain in the interval 208 to 243 (GVFLRRLESEMAAASAELDFERAARVRDDINALRRV). Residues 656 to 693 (APSPDDATTEPGAVGEPGTADGAAADPDGRDAVVVPEG) are disordered. A compositionally biased stretch (low complexity) spans 672–693 (PGTADGAAADPDGRDAVVVPEG).

The protein belongs to the UvrC family. In terms of assembly, interacts with UvrB in an incision complex.

The protein localises to the cytoplasm. In terms of biological role, the UvrABC repair system catalyzes the recognition and processing of DNA lesions. UvrC both incises the 5' and 3' sides of the lesion. The N-terminal half is responsible for the 3' incision and the C-terminal half is responsible for the 5' incision. This Beutenbergia cavernae (strain ATCC BAA-8 / DSM 12333 / CCUG 43141 / JCM 11478 / NBRC 16432 / NCIMB 13614 / HKI 0122) protein is UvrABC system protein C.